The primary structure comprises 271 residues: Formamidopyrimidine-DNA glycosylase (271 aa).

Catalysis depends on Pro-2, which acts as the Schiff-base intermediate with DNA. The active-site Proton donor is the Glu-3. Catalysis depends on Lys-57, which acts as the Proton donor; for beta-elimination activity. DNA-binding residues include His-90, Arg-109, and Lys-151. The FPG-type zinc-finger motif lies at 236–270; sequence HVYGRGGKTCTQCGHMLSEIKLGQRATVFCSLCQQ. Arg-260 serves as the catalytic Proton donor; for delta-elimination activity.

It belongs to the FPG family. Monomer. Zn(2+) serves as cofactor.

The enzyme catalyses Hydrolysis of DNA containing ring-opened 7-methylguanine residues, releasing 2,6-diamino-4-hydroxy-5-(N-methyl)formamidopyrimidine.. It carries out the reaction 2'-deoxyribonucleotide-(2'-deoxyribose 5'-phosphate)-2'-deoxyribonucleotide-DNA = a 3'-end 2'-deoxyribonucleotide-(2,3-dehydro-2,3-deoxyribose 5'-phosphate)-DNA + a 5'-end 5'-phospho-2'-deoxyribonucleoside-DNA + H(+). Involved in base excision repair of DNA damaged by oxidation or by mutagenic agents. Acts as a DNA glycosylase that recognizes and removes damaged bases. Has a preference for oxidized purines, such as 7,8-dihydro-8-oxoguanine (8-oxoG). Has AP (apurinic/apyrimidinic) lyase activity and introduces nicks in the DNA strand. Cleaves the DNA backbone by beta-delta elimination to generate a single-strand break at the site of the removed base with both 3'- and 5'-phosphates. In Shewanella pealeana (strain ATCC 700345 / ANG-SQ1), this protein is Formamidopyrimidine-DNA glycosylase.